The chain runs to 159 residues: MGVYTFENEFTSEIPPSRLFKAFVLDADNLIPKIAPQAIKQAEILEGNGGPGTIKKITFGEGSQYGYVKHRIDSIDEASYSYSYTLIEGDALTDTIEKISYETKLVACGSGSTIKSISHYHTKGNIEIKEEHVKVGKEKAHGLFKLIESYLKDHPDAYN.

This sequence belongs to the BetVI family.

The sequence is that of Major allergen Mal d 1 from Malus domestica (Apple).